We begin with the raw amino-acid sequence, 291 residues long: MTSKQLKLVIITGMSGAGKTVAMQSLEDLGYFCVDNLPPSLLPKFWELMKESDKMDKIALVMDLRGREFFDSIEPALDELDNTNFITTKILFLEADDKVLVSRYKETRRHHPLEPNGSVLDGINAERELLSDLKGRSQLVINTSNMAPRELRERINNEFQTEDKDVFNVQLMSFGFKYGIPIDADLVFDVRFLPNPHYIDKMRPLTGLDEDVYEYVMKWPETQTFLDKLVDLLMFTLPFYKREGKTQLVIAIGCTGGQHRSVALTEFVGKAIQQKYETTISHRDMKRRKGR.

Gly-13–Thr-20 lines the ATP pocket. Residue Asp-63–Gly-66 participates in GTP binding.

This sequence belongs to the RapZ-like family.

In terms of biological role, displays ATPase and GTPase activities. The sequence is that of Nucleotide-binding protein LMHCC_0126 from Listeria monocytogenes serotype 4a (strain HCC23).